Consider the following 423-residue polypeptide: Acetylornithine aminotransferase, mitochondrial (423 aa).

Lys276 carries the post-translational modification N6-(pyridoxal phosphate)lysine.

Belongs to the class-III pyridoxal-phosphate-dependent aminotransferase family. Requires pyridoxal 5'-phosphate as cofactor.

The protein localises to the mitochondrion matrix. The enzyme catalyses N(2)-acetyl-L-ornithine + 2-oxoglutarate = N-acetyl-L-glutamate 5-semialdehyde + L-glutamate. The protein operates within amino-acid biosynthesis; L-arginine biosynthesis; N(2)-acetyl-L-ornithine from L-glutamate: step 4/4. In Eremothecium gossypii (strain ATCC 10895 / CBS 109.51 / FGSC 9923 / NRRL Y-1056) (Yeast), this protein is Acetylornithine aminotransferase, mitochondrial (ARG8).